The primary structure comprises 252 residues: Imidazole glycerol phosphate synthase subunit HisF (252 aa).

Catalysis depends on residues D11 and D130.

The protein belongs to the HisA/HisF family. As to quaternary structure, heterodimer of HisH and HisF.

The protein resides in the cytoplasm. The enzyme catalyses 5-[(5-phospho-1-deoxy-D-ribulos-1-ylimino)methylamino]-1-(5-phospho-beta-D-ribosyl)imidazole-4-carboxamide + L-glutamine = D-erythro-1-(imidazol-4-yl)glycerol 3-phosphate + 5-amino-1-(5-phospho-beta-D-ribosyl)imidazole-4-carboxamide + L-glutamate + H(+). Its pathway is amino-acid biosynthesis; L-histidine biosynthesis; L-histidine from 5-phospho-alpha-D-ribose 1-diphosphate: step 5/9. Its function is as follows. IGPS catalyzes the conversion of PRFAR and glutamine to IGP, AICAR and glutamate. The HisF subunit catalyzes the cyclization activity that produces IGP and AICAR from PRFAR using the ammonia provided by the HisH subunit. The chain is Imidazole glycerol phosphate synthase subunit HisF from Alkaliphilus metalliredigens (strain QYMF).